Consider the following 562-residue polypeptide: 2-succinyl-5-enolpyruvyl-6-hydroxy-3-cyclohexene-1-carboxylate synthase (562 aa).

It belongs to the TPP enzyme family. MenD subfamily. As to quaternary structure, homodimer. It depends on Mg(2+) as a cofactor. Mn(2+) serves as cofactor. Requires thiamine diphosphate as cofactor.

It carries out the reaction isochorismate + 2-oxoglutarate + H(+) = 5-enolpyruvoyl-6-hydroxy-2-succinyl-cyclohex-3-ene-1-carboxylate + CO2. It functions in the pathway quinol/quinone metabolism; 1,4-dihydroxy-2-naphthoate biosynthesis; 1,4-dihydroxy-2-naphthoate from chorismate: step 2/7. The protein operates within cofactor biosynthesis; phylloquinone biosynthesis. In terms of biological role, catalyzes the thiamine diphosphate-dependent decarboxylation of 2-oxoglutarate and the subsequent addition of the resulting succinic semialdehyde-thiamine pyrophosphate anion to isochorismate to yield 2-succinyl-5-enolpyruvyl-6-hydroxy-3-cyclohexene-1-carboxylate (SEPHCHC). The sequence is that of 2-succinyl-5-enolpyruvyl-6-hydroxy-3-cyclohexene-1-carboxylate synthase from Thermosynechococcus vestitus (strain NIES-2133 / IAM M-273 / BP-1).